A 285-amino-acid polypeptide reads, in one-letter code: Bifunctional protein FolD (285 aa).

NADP(+)-binding positions include 166–168 (GAS) and Ile232.

This sequence belongs to the tetrahydrofolate dehydrogenase/cyclohydrolase family. In terms of assembly, homodimer.

It carries out the reaction (6R)-5,10-methylene-5,6,7,8-tetrahydrofolate + NADP(+) = (6R)-5,10-methenyltetrahydrofolate + NADPH. The enzyme catalyses (6R)-5,10-methenyltetrahydrofolate + H2O = (6R)-10-formyltetrahydrofolate + H(+). It participates in one-carbon metabolism; tetrahydrofolate interconversion. Functionally, catalyzes the oxidation of 5,10-methylenetetrahydrofolate to 5,10-methenyltetrahydrofolate and then the hydrolysis of 5,10-methenyltetrahydrofolate to 10-formyltetrahydrofolate. This is Bifunctional protein FolD from Vibrio atlanticus (strain LGP32) (Vibrio splendidus (strain Mel32)).